Consider the following 833-residue polypeptide: Leucine--tRNA ligase (833 aa).

The 'HIGH' region signature appears at 41–52; the sequence is PYPSGAGLHVGH. Residues 610 to 614 carry the 'KMSKS' region motif; that stretch reads KMSKS. ATP is bound at residue lysine 613.

Belongs to the class-I aminoacyl-tRNA synthetase family.

The protein resides in the cytoplasm. It carries out the reaction tRNA(Leu) + L-leucine + ATP = L-leucyl-tRNA(Leu) + AMP + diphosphate. This is Leucine--tRNA ligase from Streptococcus pneumoniae (strain 70585).